The primary structure comprises 1123 residues: Phytochrome 1 (1123 aa).

The segment covering 1–15 (MSTPKKTYSSTSSAK) has biased composition (low complexity). The segment at 1–20 (MSTPKKTYSSTSSAKSKAHS) is disordered. One can recognise a GAF domain in the interval 216 to 395 (DIGLLCDTVV…VFGLQLNMEV (180 aa)). Cys321 serves as a coordination point for phytochromobilin. PAS domains lie at 610 to 681 (VANE…LRGE) and 744 to 815 (DYKT…TKFM). Residues 895–1115 (YIRQEIKNPL…VVNVELPMAQ (221 aa)) form the Histidine kinase domain.

It belongs to the phytochrome family. In terms of assembly, homodimer. Contains one covalently linked phytochromobilin chromophore.

It is found in the cytoplasm. Its function is as follows. Regulatory photoreceptor which exists in two forms that are reversibly interconvertible by light: the Pr form that absorbs maximally in the red region of the spectrum and the Pfr form that absorbs maximally in the far-red region. Photoconversion of Pr to Pfr induces an array of morphogenetic responses, whereas reconversion of Pfr to Pr cancels the induction of those responses. Pfr controls the expression of a number of nuclear genes including those encoding the small subunit of ribulose-bisphosphate carboxylase, chlorophyll A/B binding protein, protochlorophyllide reductase, rRNA, etc. It also controls the expression of its own gene(s) in a negative feedback fashion. Mediates chloroplast avoidance movement in cytoplasm. This is Phytochrome 1 (PHY1) from Physcomitrium patens (Spreading-leaved earth moss).